The primary structure comprises 51 residues: Lipid-anchored plasma membrane protein CPP3 (51 aa).

A disordered region spans residues 1–28 (MRHHQNMHYAPQQQPVYVQQPPPRRESG).

Belongs to the CYSTM1 family. Palmitoylated near the C-terminus.

The protein localises to the cell membrane. This chain is Lipid-anchored plasma membrane protein CPP3, found in Saccharomyces cerevisiae (strain ATCC 204508 / S288c) (Baker's yeast).